The sequence spans 113 residues: Hemerythrin (113 aa).

Residues histidine 25, histidine 54, glutamate 58, histidine 73, histidine 77, histidine 101, and aspartate 106 each contribute to the Fe cation site.

The protein belongs to the hemerythrin family. Homooctamer.

Functionally, hemerythrin is a respiratory protein in blood cells of certain marine worms. The oxygen-binding site in each chain contains two iron atoms. The polypeptide is Hemerythrin (Themiste dyscrita (Peanut worm)).